A 142-amino-acid chain; its full sequence is Hemoglobin subunit alpha-2 (142 aa).

Positions 2–142 (LLSADDKKHI…VSTVLTSKYR (141 aa)) constitute a Globin domain. An O2-binding site is contributed by His-59. His-88 lines the heme b pocket.

Belongs to the globin family. Heterotetramer of two alpha chains and two beta chains. In terms of tissue distribution, red blood cells.

Functionally, involved in oxygen transport from the lung to the various peripheral tissues. The sequence is that of Hemoglobin subunit alpha-2 (hba2) from Xenopus laevis (African clawed frog).